Consider the following 344-residue polypeptide: MNILPRINAIEKTDANHHAIAWWLIGVAALVFIMVVVGGLTRLTESGLSITEWKPVTGALPPMTEEHWQEEFDLYRQIPQYQLVNKGMSLDEFKTIYWWEWSHRFLGRLIGLAFFVPFVFFVVTRRVERALVPRLIFLFVLGGMQGVLGWWMVMSGLTDRTEVSQYRLAAHLGLATLIFGALIWTALDLLNGKSTRLLTGLAKAAAAILALIFLQTILGAFVAGIRAGLIYNTWPLMAGAFIPDGLFAMTPVWHNFFESHLTVQFQHRMTAYLLLLCVVWHWWAARKTAAAPSAGWLAVATFAQACIGIWTVLWVVPIPLGAAHQAGAMVVFGVAVWHVHRLAK.

The next 9 helical transmembrane spans lie at 20–40 (IAWWLIGVAALVFIMVVVGGL), 104–124 (RFLGRLIGLAFFVPFVFFVVT), 135–155 (LIFLFVLGGMQGVLGWWMVMS), 170–190 (AHLGLATLIFGALIWTALDLL), 205–225 (AAAILALIFLQTILGAFVAGI), 233–253 (TWPLMAGAFIPDGLFAMTPVW), 265–285 (FQHRMTAYLLLLCVVWHWWAA), 296–316 (WLAVATFAQACIGIWTVLWVV), and 317–337 (PIPLGAAHQAGAMVVFGVAVW). Position 267 (His267) interacts with heme. A heme-binding site is contributed by His324.

It belongs to the COX15/CtaA family. Type 2 subfamily. Interacts with CtaB. Heme b serves as cofactor.

It is found in the cell membrane. It catalyses the reaction Fe(II)-heme o + 2 A + H2O = Fe(II)-heme a + 2 AH2. It functions in the pathway porphyrin-containing compound metabolism; heme A biosynthesis; heme A from heme O: step 1/1. Its function is as follows. Catalyzes the conversion of heme O to heme A by two successive hydroxylations of the methyl group at C8. The first hydroxylation forms heme I, the second hydroxylation results in an unstable dihydroxymethyl group, which spontaneously dehydrates, resulting in the formyl group of heme A. This Parvibaculum lavamentivorans (strain DS-1 / DSM 13023 / NCIMB 13966) protein is Heme A synthase.